A 491-amino-acid polypeptide reads, in one-letter code: NADH-quinone oxidoreductase subunit N (491 aa).

Helical transmembrane passes span 11–31 (ATAEIFVAVMALVIMLATTFA), 38–58 (LAYGLTLVTLIGAAIITYNTA), 74–94 (LLGDVLKLLIYFSMAVALLYG), 106–126 (PEYYVLALLMTLGMMVMVTSN), 128–148 (LLSMYIGLELMSLSLYALVAF), 163–183 (FVLGALASGLLLYGMSMLYGA), 206–226 (LLFGLVFLMAGICFKLGVVPF), 243–263 (LIIATAPKLAAFAMAVRLLVW), 272–292 (WQTMLMFVAVLSIVLGNLAAI), 301–321 (LAYSGISHMGFMLLGLLSGVV), 336–356 (MFYAISYVIMSLASFGMIILL), 379–399 (FAAMMMFVMFSMAGIPFFIGF), 410–430 (VAAGYIWVAVVAVLMSVIGAF), and 465–485 (LAIAAIGLAPQGVMTLCTFVL).

Belongs to the complex I subunit 2 family. In terms of assembly, NDH-1 is composed of 14 different subunits. Subunits NuoA, H, J, K, L, M, N constitute the membrane sector of the complex.

It localises to the cell inner membrane. The catalysed reaction is a quinone + NADH + 5 H(+)(in) = a quinol + NAD(+) + 4 H(+)(out). Its function is as follows. NDH-1 shuttles electrons from NADH, via FMN and iron-sulfur (Fe-S) centers, to quinones in the respiratory chain. The immediate electron acceptor for the enzyme in this species is believed to be ubiquinone. Couples the redox reaction to proton translocation (for every two electrons transferred, four hydrogen ions are translocated across the cytoplasmic membrane), and thus conserves the redox energy in a proton gradient. The protein is NADH-quinone oxidoreductase subunit N of Azoarcus sp. (strain BH72).